We begin with the raw amino-acid sequence, 192 residues long: VQ motif-containing protein 22 (192 aa).

The segment covering 24–38 has biased composition (low complexity); that stretch reads ASTAVTTTTAGDTTS. The tract at residues 24 to 65 is disordered; it reads ASTAVTTTTAGDTTSIDSRLSPETGRVTKPTRRRSRASRRTP. The span at 52–62 shows a compositional bias: basic residues; the sequence is KPTRRRSRASR. Residues 76-85 carry the VQ motif; it reads FRAMVQQYTG. Disordered regions lie at residues 101–135 and 163–192; these read FSLTSSSDPSAGSSQQAPWQYNFQPHAPLQPPQRP and FGTVDGSGGGGSAPSSKEATNSNSSSSRLQ. 2 stretches are compositionally biased toward low complexity: residues 102-114 and 175-192; these read SLTSSSDPSAGSS and APSSKEATNSNSSSSRLQ.

The protein resides in the nucleus. Its function is as follows. May function as positive regulator of plant growth. The polypeptide is VQ motif-containing protein 22 (Arabidopsis thaliana (Mouse-ear cress)).